The primary structure comprises 202 residues: MSNLSARTGRDHQRYDNNFRLVSGCIPYRLVKDEEEDSTSVDFENKLQVLMISSPNRHDLVFPKGGWEDDETVLEAASREAMEEAGVKGILREDPLGVWEFRSKSSSVEADCCLGGGCKGYMFALEVKEELAIWPEQDDRERRWLNVKEALELCRYEWMQSALEEFLRVMAEEGSTKEDSLAISSISNRGERQIDPRYCFVV.

The region spanning 18–167 is the Nudix hydrolase domain; sequence NFRLVSGCIP…WMQSALEEFL (150 aa). Residues 65 to 86 carry the Nudix box motif; it reads GGWEDDETVLEAASREAMEEAG. The Mg(2+) site is built by E80 and E84.

This sequence belongs to the Nudix hydrolase family. Monomer. It depends on Mg(2+) as a cofactor. Expressed in roots, leaves, stems and inflorescences.

The protein resides in the mitochondrion. Inhibited by fluoride. In terms of biological role, mediates the hydrolysis of some nucleoside diphosphate derivatives. Can use diadenosine 5',5'''-P(1)P(6) hexaphosphate (Ap(6)A), diadenosine 5',5'''-P(1)P(5) pentaphosphate (Ap(5)A) and adenosine tetraphosphate (p(4)A) as substrates, but not diadenosine 5',5'''-P(1)P(4) tetraphosphate (Ap(4)A), diadenosine 5',5'''-P(1)P(3) triphosphate (Ap(3)A), deoxyribonucleoside triphosphates, ribonucleoside triphosphates, diphosphoinositol pentakisphosphate (PP-InsP(5)) and 5-phospho-alpha-D-ribosyl diphosphate (PRPP). In Arabidopsis thaliana (Mouse-ear cress), this protein is Nudix hydrolase 13, mitochondrial (NUDT13).